A 252-amino-acid polypeptide reads, in one-letter code: Protein A47 (252 aa).

Belongs to the orthopoxvirus A47 protein family.

The chain is Protein A47 from Vaccinia virus (strain Western Reserve) (VACV).